Here is a 250-residue protein sequence, read N- to C-terminus: uncharacterized protein (250 aa).

Residues 4–24 (FKYLLFLVVFAVFFLTFAFFD) traverse the membrane as a helical segment.

The protein localises to the membrane. This is an uncharacterized protein from Methanocaldococcus jannaschii (strain ATCC 43067 / DSM 2661 / JAL-1 / JCM 10045 / NBRC 100440) (Methanococcus jannaschii).